Reading from the N-terminus, the 238-residue chain is tRNA (guanine-N(7)-)-methyltransferase (238 aa).

S-adenosyl-L-methionine contacts are provided by E68, E93, D120, and D143. Residue D143 is part of the active site. Substrate is bound by residues K147, D179, and 216–219 (TKFE).

The protein belongs to the class I-like SAM-binding methyltransferase superfamily. TrmB family.

It catalyses the reaction guanosine(46) in tRNA + S-adenosyl-L-methionine = N(7)-methylguanosine(46) in tRNA + S-adenosyl-L-homocysteine. It functions in the pathway tRNA modification; N(7)-methylguanine-tRNA biosynthesis. Its function is as follows. Catalyzes the formation of N(7)-methylguanine at position 46 (m7G46) in tRNA. This is tRNA (guanine-N(7)-)-methyltransferase from Shewanella baltica (strain OS195).